A 178-amino-acid polypeptide reads, in one-letter code: Acireductone dioxygenase (178 aa).

The interval 1–22 is disordered; the sequence is MKAYWYDNKPGDQREPHDSGRP. A compositionally biased stretch (basic and acidic residues) spans 9 to 22; sequence KPGDQREPHDSGRP. 4 residues coordinate Fe(2+): His81, His83, Glu87, and His126. Residues His81, His83, Glu87, and His126 each coordinate Ni(2+).

The protein belongs to the acireductone dioxygenase (ARD) family. Fe(2+) is required as a cofactor. The cofactor is Ni(2+).

The protein localises to the cytoplasm. It localises to the nucleus. The catalysed reaction is 1,2-dihydroxy-5-(methylsulfanyl)pent-1-en-3-one + O2 = 4-methylsulfanyl-2-oxobutanoate + formate + 2 H(+). It carries out the reaction 1,2-dihydroxy-5-(methylsulfanyl)pent-1-en-3-one + O2 = 3-(methylsulfanyl)propanoate + CO + formate + 2 H(+). It functions in the pathway amino-acid biosynthesis; L-methionine biosynthesis via salvage pathway; L-methionine from S-methyl-5-thio-alpha-D-ribose 1-phosphate: step 5/6. In terms of biological role, catalyzes 2 different reactions between oxygen and the acireductone 1,2-dihydroxy-3-keto-5-methylthiopentene (DHK-MTPene) depending upon the metal bound in the active site. Fe-containing acireductone dioxygenase (Fe-ARD) produces formate and 2-keto-4-methylthiobutyrate (KMTB), the alpha-ketoacid precursor of methionine in the methionine recycle pathway. Ni-containing acireductone dioxygenase (Ni-ARD) produces methylthiopropionate, carbon monoxide and formate, and does not lie on the methionine recycle pathway. The chain is Acireductone dioxygenase (adi1) from Emericella nidulans (strain FGSC A4 / ATCC 38163 / CBS 112.46 / NRRL 194 / M139) (Aspergillus nidulans).